Here is a 645-residue protein sequence, read N- to C-terminus: Aspartate--tRNA ligase, mitochondrial (645 aa).

Residues 1-47 (MYFPSWLSQLYRGLSRPIRRTTQPIWGSLYRSLLQSSQRRIPEFSSF) constitute a mitochondrion transit peptide. Thr219 carries the phosphothreonine modification. The residue at position 242 (Ser242) is a Phosphoserine. The aspartate stretch occupies residues 244–247 (QQFK). Arg266 is an L-aspartate binding site. Position 266–268 (266–268 (RDE)) interacts with ATP. Residue Lys382 is modified to N6-acetyllysine. Glu535 provides a ligand contact to ATP. Arg542 lines the L-aspartate pocket. 584-587 (GLDR) lines the ATP pocket.

It belongs to the class-II aminoacyl-tRNA synthetase family. Type 1 subfamily. In terms of assembly, homodimer.

The protein resides in the mitochondrion matrix. Its subcellular location is the mitochondrion membrane. The catalysed reaction is tRNA(Asp) + L-aspartate + ATP = L-aspartyl-tRNA(Asp) + AMP + diphosphate. Catalyzes the attachment of aspartate to tRNA(Asp) in a two-step reaction: aspartate is first activated by ATP to form Asp-AMP and then transferred to the acceptor end of tRNA(Asp). This Homo sapiens (Human) protein is Aspartate--tRNA ligase, mitochondrial (DARS2).